The following is a 418-amino-acid chain: MLSPTNSISKTVPAPPQDSSKPVLISEEPQNQLLQKVARTALAVLLVVVTLGLILLFYSFSDLQSFPWCCQTRPSTKEHPTISIPEPLPSPPLAVPRPSTPPPPVISRPSTPPAPTPAISPPSTPSAPKPSTPPPLPPKAPKPVKTQEDLLPFVPEQVFVEMYEDMARRQIIEALVPAWDSDIIFKCLCYFHTLYQGLIPLETFPPATIFNFKQKIISILEDKKAVLRGEPIKGSLPICCSEENYRRHLQGTTLLPVFMWYHPTPKTLSDTMQTMKQLAIKGSVGASHWLLVIVDIQARRLVYFDSLYNYVMSPEDMKKDLQSFAQQLDQVYPACDSQKFSVKIAAKEVIQKGSGSSCGAWCCQFLHWYLRDPFTDALNDLPVDSVERHENLASFVRACEAAVQDLPELFWPEAKALF.

Residues 1-10 are compositionally biased toward polar residues; the sequence is MLSPTNSISK. The disordered stretch occupies residues 1–23; it reads MLSPTNSISKTVPAPPQDSSKPV. The helical transmembrane segment at 40–60 threads the bilayer; the sequence is TALAVLLVVVTLGLILLFYSF. Residues 75 to 145 are disordered; it reads STKEHPTISI…LPPKAPKPVK (71 aa). The span at 86-141 shows a compositional bias: pro residues; sequence EPLPSPPLAVPRPSTPPPPVISRPSTPPAPTPAISPPSTPSAPKPSTPPPLPPKAP. Active-site residues include histidine 288, aspartate 305, and cysteine 358.

The protein belongs to the peptidase C48 family.

The protein localises to the secreted. The protein resides in the host cell. Its subcellular location is the membrane. In terms of biological role, effector proteins function to alter host cell physiology and promote bacterial survival in host tissues. This protease possesses deubiquitinating and deneddylating activities. The sequence is that of Deubiquitinase and deneddylase Dub1 (cdu1) from Chlamydia trachomatis serovar A (strain ATCC VR-571B / DSM 19440 / HAR-13).